The chain runs to 252 residues: Endonuclease NucS (252 aa).

It belongs to the NucS endonuclease family.

The protein resides in the cytoplasm. In terms of biological role, cleaves both 3' and 5' ssDNA extremities of branched DNA structures. This Sulfurisphaera tokodaii (strain DSM 16993 / JCM 10545 / NBRC 100140 / 7) (Sulfolobus tokodaii) protein is Endonuclease NucS.